The primary structure comprises 177 residues: Large ribosomal subunit protein uL6 (177 aa).

This sequence belongs to the universal ribosomal protein uL6 family. Part of the 50S ribosomal subunit.

This protein binds to the 23S rRNA, and is important in its secondary structure. It is located near the subunit interface in the base of the L7/L12 stalk, and near the tRNA binding site of the peptidyltransferase center. The chain is Large ribosomal subunit protein uL6 from Cronobacter sakazakii (strain ATCC BAA-894) (Enterobacter sakazakii).